The sequence spans 122 residues: E3 ubiquitin-protein ligase PPP1R11 (122 aa).

Residues 1–12 are compositionally biased toward polar residues; that stretch reads MAEVPGTSSETI. Positions 1 to 33 are disordered; that stretch reads MAEVPGTSSETITETVQTGTPPPPQQEGRSLTI. Position 20 is a phosphothreonine (T20). The interval 55 to 65 is atypical RING finger domain 1; sequence HLGRRSSKCCC. Positions 72–122 are disordered; it reads QFGESSSESEGDDEEGCGSAHCILGHGRRGHGQREGGGTTVPPSSGGTNPH. Residues 78 to 87 show a composition bias toward acidic residues; it reads SESEGDDEEG. Residues 88 to 97 are atypical RING finger domain 2; sequence CGSAHCILGH. Over residues 111–122 the composition is skewed to low complexity; the sequence is TVPPSSGGTNPH.

It carries out the reaction S-ubiquitinyl-[E2 ubiquitin-conjugating enzyme]-L-cysteine + [acceptor protein]-L-lysine = [E2 ubiquitin-conjugating enzyme]-L-cysteine + N(6)-ubiquitinyl-[acceptor protein]-L-lysine.. It functions in the pathway protein modification; protein ubiquitination. Functionally, atypical E3 ubiquitin-protein ligase which ubiquitinates TLR2 at 'Lys-754' leading to its degradation by the proteasome. Inhibitor of protein phosphatase 1. The protein is E3 ubiquitin-protein ligase PPP1R11 (ppp1r11) of Danio rerio (Zebrafish).